Consider the following 433-residue polypeptide: Adenosylhomocysteinase B (433 aa).

Positions 57, 132, 157, 187, and 191 each coordinate substrate. The tract at residues 184-351 (SVTKSKFDNL…EGRLVNLGCA (168 aa)) is NAD binding.

Belongs to the adenosylhomocysteinase family. Homotetramer. NAD(+) serves as cofactor.

Its subcellular location is the cytoplasm. It carries out the reaction S-adenosyl-L-homocysteine + H2O = L-homocysteine + adenosine. Its pathway is amino-acid biosynthesis; L-homocysteine biosynthesis; L-homocysteine from S-adenosyl-L-homocysteine: step 1/1. In terms of biological role, catalyzes the hydrolysis of S-adenosyl-L-homocysteine to form adenosine and homocysteine. Binds copper ions. This chain is Adenosylhomocysteinase B (ahcy-b), found in Xenopus laevis (African clawed frog).